Here is a 108-residue protein sequence, read N- to C-terminus: UPF0166 protein MJ1524 (108 aa).

The protein belongs to the UPF0166 family.

The sequence is that of UPF0166 protein MJ1524 from Methanocaldococcus jannaschii (strain ATCC 43067 / DSM 2661 / JAL-1 / JCM 10045 / NBRC 100440) (Methanococcus jannaschii).